A 103-amino-acid polypeptide reads, in one-letter code: Seminal ribonuclease (103 aa).

Cystine bridges form between Cys12–Cys70, Cys26–Cys81, Cys44–Cys96, and Cys51–Cys58. Substrate is bound by residues Lys27–Thr31, Lys52, and Arg71.

This sequence belongs to the pancreatic ribonuclease family. As to quaternary structure, homodimer; disulfide-linked.

The protein localises to the secreted. It carries out the reaction an [RNA] containing cytidine + H2O = an [RNA]-3'-cytidine-3'-phosphate + a 5'-hydroxy-ribonucleotide-3'-[RNA].. The catalysed reaction is an [RNA] containing uridine + H2O = an [RNA]-3'-uridine-3'-phosphate + a 5'-hydroxy-ribonucleotide-3'-[RNA].. Functionally, this enzyme hydrolyzes both single- and double-stranded RNA. This Cephalophus silvicultor (Yellow-backed duiker) protein is Seminal ribonuclease (SRN).